Consider the following 184-residue polypeptide: MIKEILKKADEKMGKTIVALKRELASMKAGRANPAMLDRIEAEYYGSMTPLNQLGNISIPEARVLLIQPWDKSALSAIEKAILKSDLGLNPSNDGTVIRLVIPELTEETRKNIVKTVKKTGEEAKVAIRSIRRDCNDDVKNLKKDDVSEDDIKKAEDDIQKKTDKYIKEIDSIISAKEKEILSI.

The protein belongs to the RRF family.

It localises to the cytoplasm. In terms of biological role, responsible for the release of ribosomes from messenger RNA at the termination of protein biosynthesis. May increase the efficiency of translation by recycling ribosomes from one round of translation to another. This Clostridium botulinum (strain Langeland / NCTC 10281 / Type F) protein is Ribosome-recycling factor.